We begin with the raw amino-acid sequence, 283 residues long: Phosphatidylglycerol--prolipoprotein diacylglyceryl transferase (283 aa).

The next 7 helical transmembrane spans lie at 18–38 (LFGH…IILG), 59–79 (LAVY…VLFY), 91–111 (IFVT…IIIA), 124–144 (ILWV…MIRL), 185–205 (TQIY…WLYW), 213–233 (YSGL…FIIE), and 251–271 (GLNM…WLII). A 1,2-diacyl-sn-glycero-3-phospho-(1'-sn-glycerol) is bound at residue Arg-143.

Belongs to the Lgt family.

Its subcellular location is the cell inner membrane. It catalyses the reaction L-cysteinyl-[prolipoprotein] + a 1,2-diacyl-sn-glycero-3-phospho-(1'-sn-glycerol) = an S-1,2-diacyl-sn-glyceryl-L-cysteinyl-[prolipoprotein] + sn-glycerol 1-phosphate + H(+). It functions in the pathway protein modification; lipoprotein biosynthesis (diacylglyceryl transfer). Catalyzes the transfer of the diacylglyceryl group from phosphatidylglycerol to the sulfhydryl group of the N-terminal cysteine of a prolipoprotein, the first step in the formation of mature lipoproteins. The polypeptide is Phosphatidylglycerol--prolipoprotein diacylglyceryl transferase (Porphyromonas gingivalis (strain ATCC 33277 / DSM 20709 / CIP 103683 / JCM 12257 / NCTC 11834 / 2561)).